Consider the following 28-residue polypeptide: leu operon leader peptide (28 aa).

Its function is as follows. Involved in control of the biosynthesis of leucine. This chain is leu operon leader peptide (leuL), found in Salmonella typhimurium (strain LT2 / SGSC1412 / ATCC 700720).